Here is a 429-residue protein sequence, read N- to C-terminus: Ribosomal RNA small subunit methyltransferase B (429 aa).

S-adenosyl-L-methionine contacts are provided by residues 254–260 (CAAPGGK), Asp277, Asp303, and Asp322. Residue Cys375 is the Nucleophile of the active site.

This sequence belongs to the class I-like SAM-binding methyltransferase superfamily. RsmB/NOP family.

Its subcellular location is the cytoplasm. The enzyme catalyses cytidine(967) in 16S rRNA + S-adenosyl-L-methionine = 5-methylcytidine(967) in 16S rRNA + S-adenosyl-L-homocysteine + H(+). Its function is as follows. Specifically methylates the cytosine at position 967 (m5C967) of 16S rRNA. The sequence is that of Ribosomal RNA small subunit methyltransferase B from Pectobacterium carotovorum subsp. carotovorum (strain PC1).